A 365-amino-acid chain; its full sequence is Aminomethyltransferase (365 aa).

It belongs to the GcvT family. In terms of assembly, the glycine cleavage system is composed of four proteins: P, T, L and H.

The catalysed reaction is N(6)-[(R)-S(8)-aminomethyldihydrolipoyl]-L-lysyl-[protein] + (6S)-5,6,7,8-tetrahydrofolate = N(6)-[(R)-dihydrolipoyl]-L-lysyl-[protein] + (6R)-5,10-methylene-5,6,7,8-tetrahydrofolate + NH4(+). Its function is as follows. The glycine cleavage system catalyzes the degradation of glycine. This Yersinia enterocolitica serotype O:8 / biotype 1B (strain NCTC 13174 / 8081) protein is Aminomethyltransferase.